Consider the following 325-residue polypeptide: Germination protease (325 aa).

Residues 1–7 (MYNVRTD) constitute a propeptide that is removed on maturation.

This sequence belongs to the peptidase A25 family. Homotetramer. In terms of processing, autoproteolytically processed. The inactive tetrameric zymogen termed p46 autoprocesses to a smaller form termed p41, which is active only during spore germination.

The enzyme catalyses Endopeptidase action with P4 Glu or Asp, P1 preferably Glu &gt; Asp, P1' hydrophobic and P2' Ala.. In terms of biological role, initiates the rapid degradation of small, acid-soluble proteins during spore germination. The chain is Germination protease from Clostridium perfringens (strain ATCC 13124 / DSM 756 / JCM 1290 / NCIMB 6125 / NCTC 8237 / Type A).